We begin with the raw amino-acid sequence, 370 residues long: DNA replication and repair protein RecF (370 aa).

30 to 37 (GQNGMGKT) contacts ATP.

Belongs to the RecF family.

It localises to the cytoplasm. In terms of biological role, the RecF protein is involved in DNA metabolism; it is required for DNA replication and normal SOS inducibility. RecF binds preferentially to single-stranded, linear DNA. It also seems to bind ATP. The sequence is that of DNA replication and repair protein RecF from Bacteroides fragilis (strain ATCC 25285 / DSM 2151 / CCUG 4856 / JCM 11019 / LMG 10263 / NCTC 9343 / Onslow / VPI 2553 / EN-2).